Consider the following 966-residue polypeptide: Isoleucine--tRNA ligase (966 aa).

Residues Met-1–Lys-16 are compositionally biased toward basic and acidic residues. Residues Met-1–Thr-24 form a disordered region. Positions Pro-69 to His-79 match the 'HIGH' region motif. Glu-599 is a binding site for L-isoleucyl-5'-AMP. A 'KMSKS' region motif is present at residues Lys-640 to Ser-644. Lys-643 lines the ATP pocket. The Zn(2+) site is built by Cys-929, Cys-932, Cys-949, and Cys-952.

This sequence belongs to the class-I aminoacyl-tRNA synthetase family. IleS type 1 subfamily. Monomer. Zn(2+) is required as a cofactor.

It is found in the cytoplasm. The enzyme catalyses tRNA(Ile) + L-isoleucine + ATP = L-isoleucyl-tRNA(Ile) + AMP + diphosphate. Its function is as follows. Catalyzes the attachment of isoleucine to tRNA(Ile). As IleRS can inadvertently accommodate and process structurally similar amino acids such as valine, to avoid such errors it has two additional distinct tRNA(Ile)-dependent editing activities. One activity is designated as 'pretransfer' editing and involves the hydrolysis of activated Val-AMP. The other activity is designated 'posttransfer' editing and involves deacylation of mischarged Val-tRNA(Ile). This chain is Isoleucine--tRNA ligase, found in Cupriavidus taiwanensis (strain DSM 17343 / BCRC 17206 / CCUG 44338 / CIP 107171 / LMG 19424 / R1) (Ralstonia taiwanensis (strain LMG 19424)).